A 526-amino-acid polypeptide reads, in one-letter code: NAD(P)H-quinone oxidoreductase chain 4 2 (526 aa).

The next 14 helical transmembrane spans lie at 6–26 (FPWLSTIILFPIIAALFLPLI), 36–56 (WYALTIGLIDFVIIVTAFYTG), 91–111 (LILLTGFITTLAILAAWPVSF), 113–133 (PKLFYFLMLLMYGGQIAVFAV), 137–157 (LLFFFTWELELVPVYLILSIW), 169–189 (FILYTAGGSLFILIAALTMAF), 212–232 (LLLYGGLLIAYGVKLPIFPLH), 243–263 (TAPAHMLLAGILLKMGGYALL), 275–295 (ALFGPVLVILGVVNIVYAALT), 306–326 (IAYSSISHMGFVLIGMASFTD), 332–352 (AMLQMISHGLIGASLFFMVGA), 375–397 (IFAMWTTCSMASLALPGMSGFVA), 417–437 (VIIVFLAAVGVILTPIYLLSM), and 464–484 (VFVIACLLIPIIGIGLYPKAV).

Belongs to the complex I subunit 4 family.

It is found in the cellular thylakoid membrane. The enzyme catalyses a plastoquinone + NADH + (n+1) H(+)(in) = a plastoquinol + NAD(+) + n H(+)(out). The catalysed reaction is a plastoquinone + NADPH + (n+1) H(+)(in) = a plastoquinol + NADP(+) + n H(+)(out). Functionally, NDH-1 shuttles electrons from NAD(P)H, via FMN and iron-sulfur (Fe-S) centers, to quinones in the respiratory chain. The immediate electron acceptor for the enzyme in this species is believed to be plastoquinone. Couples the redox reaction to proton translocation (for every two electrons transferred, four hydrogen ions are translocated across the cytoplasmic membrane), and thus conserves the redox energy in a proton gradient. In Picosynechococcus sp. (strain ATCC 27264 / PCC 7002 / PR-6) (Agmenellum quadruplicatum), this protein is NAD(P)H-quinone oxidoreductase chain 4 2.